A 289-amino-acid polypeptide reads, in one-letter code: 4-diphosphocytidyl-2-C-methyl-D-erythritol kinase (289 aa).

The active site involves Lys10. ATP is bound at residue 94-104 (PVAAGLAGGSS). Residue Asp136 is part of the active site.

The protein belongs to the GHMP kinase family. IspE subfamily.

The enzyme catalyses 4-CDP-2-C-methyl-D-erythritol + ATP = 4-CDP-2-C-methyl-D-erythritol 2-phosphate + ADP + H(+). It participates in isoprenoid biosynthesis; isopentenyl diphosphate biosynthesis via DXP pathway; isopentenyl diphosphate from 1-deoxy-D-xylulose 5-phosphate: step 3/6. In terms of biological role, catalyzes the phosphorylation of the position 2 hydroxy group of 4-diphosphocytidyl-2C-methyl-D-erythritol. The chain is 4-diphosphocytidyl-2-C-methyl-D-erythritol kinase from Bacillus anthracis.